The primary structure comprises 121 residues: MKLLIVFGLLTSVYCIHKECSIQECCENQPYQIEDPCPIHYYSDWFIKIGSRKSARLVQLCEGDYGKRIPIHYQMFGNYTISCEPLEINCQAPPVGSLIVRCSYDYDFVEHHDVRVVLDFV.

The signal sequence occupies residues 1-15 (MKLLIVFGLLTSVYC). Residues 19–121 (ECSIQECCEN…HDVRVVLDFV (103 aa)) enclose the SARS ORF8 Ig-like domain. 3 disulfides stabilise this stretch: C25–C90, C37–C102, and C61–C83.

This chain is Non-structural protein 8, found in Bat coronavirus Rp3/2004 (BtCoV/Rp3/2004).